The following is a 696-amino-acid chain: Protein OS-9 homolog (696 aa).

Residues Met1–Ala15 form the signal peptide. 3 N-linked (GlcNAc...) asparagine glycosylation sites follow: Asn35, Asn46, and Asn68. An MRH domain is found at Asn106–Leu224. An intrachain disulfide couples Cys108 to Cys121. 6 residues coordinate a mannooligosaccharide derivative: Trp116, Gln128, Asp178, Arg184, Glu206, and Tyr212. Cystine bridges form between Cys177–Cys210 and Cys192–Cys222. N-linked (GlcNAc...) asparagine glycosylation is found at Asn276, Asn290, and Asn372. 2 disordered regions span residues Ile450 to Asp600 and Thr667 to Leu696. The span at Thr458 to Ser467 shows a compositional bias: polar residues. The segment covering Arg482–Glu498 has biased composition (basic and acidic residues). Polar residues-rich tracts occupy residues Glu499–Ser518, Asn528–Asp553, and Asn585–Asp597. Asn588 carries an N-linked (GlcNAc...) asparagine glycan. Residues Glu685–Leu696 show a composition bias toward basic and acidic residues.

This sequence belongs to the OS-9 family. As to quaternary structure, interacts with missfolded ER lumenal proteins.

The protein localises to the endoplasmic reticulum membrane. In terms of biological role, lectin involved in the quality control of the secretory pathway. As a member of the endoplasmic reticulum-associated degradation lumenal (ERAD-L) surveillance system, targets misfolded endoplasmic reticulum lumenal glycoproteins for degradation. The protein is Protein OS-9 homolog (YOS9) of Candida glabrata (strain ATCC 2001 / BCRC 20586 / JCM 3761 / NBRC 0622 / NRRL Y-65 / CBS 138) (Yeast).